The primary structure comprises 93 residues: MATRLSDAEIEERLGDLTGWTRQGNEIRKTFQLPSFPSAIAFVVNVAFLAEAAGHHPDIDIRWRKVTLSLTTHDAGGLTQKDFDLATQIDEIM.

This sequence belongs to the pterin-4-alpha-carbinolamine dehydratase family.

The catalysed reaction is (4aS,6R)-4a-hydroxy-L-erythro-5,6,7,8-tetrahydrobiopterin = (6R)-L-erythro-6,7-dihydrobiopterin + H2O. This is Putative pterin-4-alpha-carbinolamine dehydratase from Roseiflexus sp. (strain RS-1).